The primary structure comprises 473 residues: MTRGRVIQVMGPVVDVKFENGHLPAIYNALKIQHKARNENEVDIDLTLEVALHLGDDTVRTIAMASTDGLIRGMEVIDTGAPISVPVGQVTLGRVFNVLGEPIDLEGDIPADARRDPIHRPAPKFEELATEVEILETGIKVVDLLAPYIKGGKIGLFGGAGVGKTVLIQELIHNIAQEHGGISVFAGVGERTREGNDLYHEMKDSGVISKTAMVFGQMNEPPGARMRVALTGLTMAEYFRDEQGQDGLLFIDNIFRFTQAGSEVSALLGRMPSAIGYQPTLATEMGQLQERITSTAKGSITSIQAIYVPADDYTDPAPATTFSHLDATTNLERKLAEMGIYPAVDPLVSTSRALAPEIVGEEHYQVARKVQQTLERYKELQDIIAILGMDELSDEDKLVVHRARRIQFFLSQNFHVAEQFTGQPGSYVPVKETVRGFKEILEGKYDHLPEDRFRLVGRIEEVVEKAKAMGVEV.

Residue 158–165 coordinates ATP; that stretch reads GGAGVGKT.

The protein belongs to the ATPase alpha/beta chains family. F-type ATPases have 2 components, CF(1) - the catalytic core - and CF(0) - the membrane proton channel. CF(1) has five subunits: alpha(3), beta(3), gamma(1), delta(1), epsilon(1). CF(0) has three main subunits: a(1), b(2) and c(9-12). The alpha and beta chains form an alternating ring which encloses part of the gamma chain. CF(1) is attached to CF(0) by a central stalk formed by the gamma and epsilon chains, while a peripheral stalk is formed by the delta and b chains.

The protein localises to the cell membrane. It catalyses the reaction ATP + H2O + 4 H(+)(in) = ADP + phosphate + 5 H(+)(out). Produces ATP from ADP in the presence of a proton gradient across the membrane. The catalytic sites are hosted primarily by the beta subunits. The protein is ATP synthase subunit beta of Bacillus sp. (strain PS3).